The chain runs to 630 residues: Adagio-like protein 3 (630 aa).

Residues 54 to 126 form the PAS domain; sequence EDEAAAWEGR…PLVDPMVVSE (73 aa). Cysteine 102 carries the S-4a-FMN cysteine modification. An F-box domain is found at 220–268; that stretch reads YCCILQLSDEVLAHNILSRLSPRDVASIGSVCTRMHELTKNDHLRKMVC. Kelch repeat units follow at residues 380-430, 432-483, 485-537, 545-597, and 599-629; these read SWLV…CTLD, SKLV…SVFG, TKLF…RLDH, GRII…CVVG, and TRVL…PDED.

This sequence belongs to the ADAGIO family. Post-translationally, FMN binds covalently to cysteine after exposure to blue light and is reversed in the dark.

The protein localises to the nucleus. Its pathway is protein modification; protein ubiquitination. In terms of biological role, component of an E3 ubiquitin ligase complex that plays a central role in blue light-dependent circadian cycles. Acts as a blue light photoreceptor, due to the presence of FMN, that mediates light-regulated protein degradation of critical clock components by targeting them to the proteasome complex. The SCF(ADO3) E3 ubiquitin ligase complex is involved in the regulation of circadian clock-dependent processes including transition to flowering time, hypocotyl elongation, cotyledons and leaf movement rhythms. The polypeptide is Adagio-like protein 3 (Oryza sativa subsp. japonica (Rice)).